Consider the following 389-residue polypeptide: uncharacterized protein (389 aa).

The N-terminal stretch at Met-1–Ala-29 is a signal peptide.

Belongs to the bacterial solute-binding protein 1 family. WtpA subfamily.

This is an uncharacterized protein from Thermoplasma volcanium (strain ATCC 51530 / DSM 4299 / JCM 9571 / NBRC 15438 / GSS1).